The primary structure comprises 905 residues: Phosphatidylethanolamine N-methyltransferase (905 aa).

2 stretches are compositionally biased toward polar residues: residues 1 to 22 and 40 to 58; these read MTNQ…STSV and DSNG…SSLN. A disordered region spans residues 1 to 73; the sequence is MTNQIPSASS…SEPERYGCTP (73 aa). Topologically, residues 1-104 are lumenal; sequence MTNQIPSASS…DPRFSKTPWD (104 aa). The helical transmembrane segment at 105 to 125 threads the bilayer; it reads WIVISSILAQVLLFFMTTGAV. Over 126–128 the chain is Cytoplasmic; sequence RRY. Residues 129–149 form a helical membrane-spanning segment; the sequence is SMMLCFFFWRISYDAGIGFLL. The Lumenal segment spans residues 150-209; it reads HMQSNHRKVVTWISDFGFFDKENHPKLYDLTKKQLISKMDSSYNYDTSPLEFNSWLVFRH. The helical transmembrane segment at 210 to 230 threads the bilayer; it reads FVDLILMCDFCSYILMGLAWT. Over 231–236 the chain is Cytoplasmic; that stretch reads CWPKVN. Residues 237-257 traverse the membrane as a helical segment; sequence IILQFLRIFGGIALIVFNYWV. The Lumenal portion of the chain corresponds to 258–268; that stretch reads KMDAHRVVRDY. A helical transmembrane segment spans residues 269 to 289; it reads AWYWGDFFFLLRSSLVFNGVF. The Cytoplasmic segment spans residues 290 to 313; it reads ELAPHPMYSVGYAGYYGMSLLTGS. Residues 314–334 traverse the membrane as a helical segment; the sequence is YAVLFASILAHAAQFGFLLFV. At 335 to 379 the chain is on the lumenal side; sequence ENPHIERTYGTDINHARLSPRGEDNEFELPPEHDLVGFVNFDFTR. S353 carries the phosphoserine modification. The helical transmembrane segment at 380-400 threads the bilayer; the sequence is ISDVALLIIALYSIFIILLSS. The Cytoplasmic segment spans residues 401–408; it reads NSHYSQFW. The helical transmembrane segment at 409 to 429 threads the bilayer; it reads AIFQAFVWRFLHSIIHAFILF. The Lumenal segment spans residues 430–456; it reads YQSKSKAWTKHFIRNGESAAYAWSQWK. Residues 457–479 traverse the membrane as a helical segment; that stretch reads GLYNLTLNMSYISFVMAAWKLYH. Residues 480 to 493 are Cytoplasmic-facing; it reads LPSNWTYGLVSLRH. Residues 494 to 514 form a helical membrane-spanning segment; that stretch reads ALGFGLIALHIYTSVSIYEDL. Residues 515 to 552 are Lumenal-facing; the sequence is GQYGWFYGDFFLPSRSPKLVYQGIYRYVNNPERFLGCS. The helical transmembrane segment at 553–573 threads the bilayer; the sequence is AYWGLALISSSAWIFLIAILA. Residues 574–905 lie on the Cytoplasmic side of the membrane; the sequence is QLSNLAIIRL…FDGPSGAKDD (332 aa).

The protein belongs to the class VI-like SAM-binding methyltransferase superfamily. CHO2 family.

Its subcellular location is the endoplasmic reticulum membrane. It catalyses the reaction a 1,2-diacyl-sn-glycero-3-phosphoethanolamine + S-adenosyl-L-methionine = a 1,2-diacyl-sn-glycero-3-phospho-N-methylethanolamine + S-adenosyl-L-homocysteine + H(+). The protein operates within phospholipid metabolism; phosphatidylcholine biosynthesis. Functionally, catalyzes the first step of the methylation pathway of phosphatidylcholine biosynthesis, the SAM-dependent methylation of phosphatidylethanolamine (PE) to phosphatidylmonomethylethanolamine (PMME). This chain is Phosphatidylethanolamine N-methyltransferase, found in Schizosaccharomyces pombe (strain 972 / ATCC 24843) (Fission yeast).